We begin with the raw amino-acid sequence, 368 residues long: Probable magnesium transporter (368 aa).

The Extracellular segment spans residues 1–4 (MEDK). Residues 5 to 25 (YIGLALAMSSSLAIGTSFIIT) traverse the membrane as a helical segment. Residues 26–50 (KKGLMDASARTGGTDGVQASDYLQN) are Cytoplasmic-facing. The helical transmembrane segment at 51–71 (PIWWGGMITMAIGEIANFAAY) threads the bilayer. Residues 72 to 76 (TFAPA) lie on the Extracellular side of the membrane. A helical membrane pass occupies residues 77–97 (ILVTPLGALSVIIGAVLAAIF). The Cytoplasmic segment spans residues 98–101 (LKER). Residues 102-122 (LGTLGKMGCAICLMGSVIIIL) traverse the membrane as a helical segment. The Extracellular segment spans residues 123 to 143 (HAPPDKEVQTVDEILGYATQP). The helical transmembrane segment at 144–164 (GFMFYCTVVTLYSLFMIYKIV) threads the bilayer. The Cytoplasmic portion of the chain corresponds to 165–175 (PKYGNTNPMIY). Residues 176–196 (LSICSSVGSISVMSIKAFGIA) form a helical membrane-spanning segment. Residues 197 to 206 (LKLTLGGNNQ) are Extracellular-facing. Residues 207 to 227 (FTHVSTYLFLIVVALCIVTQM) traverse the membrane as a helical segment. At 228-240 (NYFNKALDQFDTS) the chain is on the cytoplasmic side. The helical transmembrane segment at 241-261 (IVNPLYYVTFTTFTLAASFIL) threads the bilayer. Residues 262 to 269 (FKGFNTSS) lie on the Extracellular side of the membrane. Asn266 carries N-linked (GlcNAc...) asparagine glycosylation. A helical membrane pass occupies residues 270-290 (AVDIISLLIGFLIIFSGVYLL). The Cytoplasmic segment spans residues 291 to 368 (NISRSESPMV…GDEDTRNYRH (78 aa)).

The protein belongs to the NIPA family.

Its subcellular location is the cell membrane. It is found in the early endosome. The enzyme catalyses Mg(2+)(in) = Mg(2+)(out). In terms of biological role, probably acts as a selective Mg(2+) transporter. Plays a role in cell wall integrity and in engulfment by host macrophages. This Candida albicans (strain SC5314 / ATCC MYA-2876) (Yeast) protein is Probable magnesium transporter.